We begin with the raw amino-acid sequence, 55 residues long: Large ribosomal subunit protein bL32 (55 aa).

The span at 1-19 (MAVPKRRMSRANTHSRRSQ) shows a compositional bias: basic residues. Residues 1 to 20 (MAVPKRRMSRANTHSRRSQW) form a disordered region.

The protein belongs to the bacterial ribosomal protein bL32 family.

The sequence is that of Large ribosomal subunit protein bL32 from Corynebacterium jeikeium (strain K411).